We begin with the raw amino-acid sequence, 307 residues long: Oxygen-dependent coproporphyrinogen-III oxidase (307 aa).

Position 99 (serine 99) interacts with substrate. 2 residues coordinate a divalent metal cation: histidine 103 and histidine 113. Catalysis depends on histidine 113, which acts as the Proton donor. Position 115–117 (asparagine 115–arginine 117) interacts with substrate. A divalent metal cation contacts are provided by histidine 152 and histidine 182. An important for dimerization region spans residues tyrosine 247–arginine 282. Residue glycine 265–arginine 267 participates in substrate binding.

It belongs to the aerobic coproporphyrinogen-III oxidase family. As to quaternary structure, homodimer. A divalent metal cation serves as cofactor.

It is found in the cytoplasm. It carries out the reaction coproporphyrinogen III + O2 + 2 H(+) = protoporphyrinogen IX + 2 CO2 + 2 H2O. It participates in porphyrin-containing compound metabolism; protoporphyrin-IX biosynthesis; protoporphyrinogen-IX from coproporphyrinogen-III (O2 route): step 1/1. Its function is as follows. Involved in the heme biosynthesis. Catalyzes the aerobic oxidative decarboxylation of propionate groups of rings A and B of coproporphyrinogen-III to yield the vinyl groups in protoporphyrinogen-IX. The protein is Oxygen-dependent coproporphyrinogen-III oxidase of Burkholderia orbicola (strain MC0-3).